Consider the following 1824-residue polypeptide: Afadin (1824 aa).

In terms of domain architecture, Ras-associating 1 spans 39–133; sequence FHGVMRFYFQ…GRFVLKNEND (95 aa). Residues 128 to 194 form a disordered region; sequence LKNENDAIPP…DRPFQGEDVE (67 aa). The stretch at 146-185 forms a coiled coil; sequence EKQEKEGVIQNFKRTLSKKEKKEKKKREKEALRQASDKDD. Basic residues predominate over residues 160–172; the sequence is TLSKKEKKEKKKR. A compositionally biased stretch (basic and acidic residues) spans 173–189; it reads EKEALRQASDKDDRPFQ. 3 positions are modified to phosphoserine: S216, S246, and S256. One can recognise a Ras-associating 2 domain in the interval 246-348; it reads SGGTLRIYAD…LVFQLKRRPP (103 aa). The span at 349-371 shows a compositional bias: basic and acidic residues; sequence DHIPKKTKKHLEGKTPKGKERAD. Residues 349-378 are disordered; sequence DHIPKKTKKHLEGKTPKGKERADGSGYGST. Phosphoserine is present on residues S391 and S424. One can recognise an FHA domain in the interval 426–492; sequence TEVGTEKLDD…LQSGMKVQFG (67 aa). Phosphoserine occurs at positions 512, 557, 562, 589, and 655. Residues 534 to 595 form a disordered region; sequence FDLGGDIHSG…RQESRTQDAS (62 aa). Positions 580–591 are enriched in basic and acidic residues; that stretch reads QQPDYRRQESRT. The region spanning 668–908 is the Dilute domain; it reads NKMVSMMEGV…IENVVTVAEN (241 aa). A PDZ domain is found at 1007-1093; sequence IITVTLKKQN…VVTLEVAKQG (87 aa). Phosphoserine occurs at positions 1083, 1107, 1126, 1140, 1143, 1172, 1173, 1182, and 1199. The tract at residues 1107 to 1223 is disordered; that stretch reads SPMMQRISDR…PRPEAYPIPT (117 aa). Residues 1113–1128 show a composition bias toward basic and acidic residues; that stretch reads ISDRRGSGKPRPKSEG. Positions 1132-1143 are enriched in polar residues; sequence YNNSTQNGSPES. Positions 1152–1172 are enriched in basic and acidic residues; the sequence is SEPKKLPGDDRLMKNRADHRS. Residues 1190 to 1210 are compositionally biased toward polar residues; the sequence is ASGTTAKITSVSTGNLCTEEQ. A phosphothreonine mark is found at T1211 and T1232. Disordered stretches follow at residues 1235–1473, 1501–1528, and 1569–1824; these read ASKS…LQRP, SKEE…EKQQ, and RLQE…LNTK. S1238 is modified (phosphoserine). Basic and acidic residues-rich tracts occupy residues 1252 to 1262 and 1274 to 1302; these read YEEKPHMHTDS and RSQE…KSDS. S1275 bears the Phosphoserine mark. Over residues 1309–1318 the composition is skewed to low complexity; that stretch reads SSSLDSSTSS. Residues 1325 to 1337 show a composition bias toward polar residues; that stretch reads SSKSVTPASTLTK. The residue at position 1328 (S1328) is a Phosphoserine. T1330 carries the post-translational modification Phosphothreonine. Residues 1345–1356 show a composition bias toward low complexity; it reads TPAAIPATPVAV. Pro residues predominate over residues 1364–1373; sequence LPPPPPPPPV. Residues 1407–1441 are compositionally biased toward basic and acidic residues; it reads AERRKREEHQRWYEKEKARLEEERERKRREQERKL. The stretch at 1408–1448 forms a coiled coil; sequence ERRKREEHQRWYEKEKARLEEERERKRREQERKLGQMRTQS. Phosphoserine is present on residues S1501 and S1512. Residues 1515-1528 show a composition bias toward basic and acidic residues; sequence PWKRDAKEKLEKQQ. Residues 1523–1667 adopt a coiled-coil conformation; sequence KLEKQQQMHI…SRLEAERRRQ (145 aa). Positions 1578–1589 are enriched in acidic residues; that stretch reads EDDEEEEDDDVD. A compositionally biased stretch (basic and acidic residues) spans 1597–1677; the sequence is LEAERRARLQ…HDEAARRLLE (81 aa). The segment covering 1694-1709 has biased composition (pro residues); it reads PPSPSPAPGAPPPPPQ. S1696, S1721, S1774, S1779, and S1799 each carry phosphoserine. Residues 1762–1776 are compositionally biased toward basic and acidic residues; sequence DACRDAKEKRSKSQD. Position 1807 is an N6-acetyllysine (K1807). Positions 1813-1824 are enriched in basic and acidic residues; it reads KLTELENELNTK.

As to quaternary structure, homodimer. Interacts with F-actin, nectin and NECTIN3. Essential for the association of nectin and E-cadherin. Isoform 1/s-afadin does not interact with F-actin. Interacts with ZO-1 and occludin, but probably in an indirect manner. Interacts with RIT1 and RIT2. Interacts with NRXN1 and BCR. Interacts with ADAM10; the interaction locks ADAM10 at adherens junctions following ADAM10 recruitment to adherens junctions by TSPAN33.

The protein localises to the cell junction. It localises to the adherens junction. In terms of biological role, belongs to an adhesion system, probably together with the E-cadherin-catenin system, which plays a role in the organization of homotypic, interneuronal and heterotypic cell-cell adherens junctions (AJs). Nectin- and actin-filament-binding protein that connects nectin to the actin cytoskeleton. May play a key role in the organization of epithelial structures of the embryonic ectoderm. Essential for the organization of adherens junctions. The polypeptide is Afadin (Homo sapiens (Human)).